Consider the following 200-residue polypeptide: MRIILLGPPGAGKGTQSERIVQRFGIPQLSTGDMLRAAVAAGTPVGLEAKAVMESGGLVSDRIVVGIVADRIEEPDARRGFILDGFPRTVAQAEALGEMLASKGLSLSAVVELKVDENALVGRIEKRAAETLARGQAVRKDDTPEVFKQRLEAYRAQTAPLSAYYAQKGTLETVDGMQPIDKVTADLMAVLEPHEERVAS.

10 to 15 serves as a coordination point for ATP; the sequence is GAGKGT. The interval 30 to 59 is NMP; that stretch reads STGDMLRAAVAAGTPVGLEAKAVMESGGLV. AMP contacts are provided by residues Thr31, Arg36, 57-59, 85-88, and Gln92; these read GLV and GFPR. The segment at 126–142 is LID; it reads KRAAETLARGQAVRKDD. Arg127 contributes to the ATP binding site. AMP is bound by residues Arg139 and Arg150. Gln178 contributes to the ATP binding site.

It belongs to the adenylate kinase family. As to quaternary structure, monomer.

The protein resides in the cytoplasm. It carries out the reaction AMP + ATP = 2 ADP. It participates in purine metabolism; AMP biosynthesis via salvage pathway; AMP from ADP: step 1/1. Its function is as follows. Catalyzes the reversible transfer of the terminal phosphate group between ATP and AMP. Plays an important role in cellular energy homeostasis and in adenine nucleotide metabolism. The protein is Adenylate kinase of Methylobacterium radiotolerans (strain ATCC 27329 / DSM 1819 / JCM 2831 / NBRC 15690 / NCIMB 10815 / 0-1).